The following is a 358-amino-acid chain: Capsid protein VP1/VP2 (358 aa).

A compositionally biased stretch (basic and acidic residues) spans 1-15 (MADSTSMDHDGEQRG). The segment at 1–37 (MADSTSMDHDGEQRGTKRKRDAGAGGSGAGIGKGTSN) is disordered. Residues 23-33 (GAGGSGAGIGK) are compositionally biased toward gly residues.

The protein localises to the virion. Functionally, capsid protein self-assembles to form an icosahedral capsid with a T=1 symmetry, about 22 nm in diameter, and consisting of 60 copies of size variants of the capsid proteins, which differ in the N-terminushe capsid encapsulates the genomic ssDNA. Capsid proteins are responsible for the attachment to host cell receptors. This attachment induces virion internalization predominantly through clathrin-dependent endocytosis. The chain is Capsid protein VP1/VP2 (VP) from Aedes (Aedes densovirus).